The following is a 318-amino-acid chain: MKIKQAIDKIPGGLMLVPLFLGALCNTFTPGAGKYLGSFSNGLITGTIPILAVWFFCMGASIEFKATGTMLRKSGVLVVTKIATAWVVALIAGTFLPGDGIQNGMLAGISVLALVAAMDMTNGGLYAALMNQYGSKEEAGAFVLMSLESGPLMTMVILGASGIATFEPQLFVGAVLPFLIGFALGNLDPDLRKLFGNSVQTLIPFFAFALGNTINLSVILQTGFAGIFLGLLVIVVTGIPLILADKFIGGGNGTAGVAASSSAGAAVATPLLIANMAPEFAPVAQQATALVATSVIVTSVLVPIITALWAKRFSPKHA.

The next 10 membrane-spanning stretches (helical) occupy residues 10 to 30 (IPGG…TFTP), 42 to 62 (GLIT…GASI), 76 to 96 (VLVV…GTFL), 105 to 125 (MLAG…NGGL), 139 to 159 (AGAF…VILG), 163 to 183 (IATF…IGFA), 199 to 219 (VQTL…LSVI), 224 to 244 (FAGI…LILA), 263 to 283 (AGAA…FAPV), and 289 to 309 (ALVA…TALW).

It belongs to the KdgT transporter family.

The protein localises to the cell inner membrane. It carries out the reaction 2-dehydro-3-deoxy-D-gluconate(in) + H(+)(in) = 2-dehydro-3-deoxy-D-gluconate(out) + H(+)(out). Functionally, catalyzes the proton-dependent uptake of 2-keto-3-deoxygluconate (KDG) into the cell. This Pectobacterium carotovorum subsp. carotovorum (Erwinia carotovora subsp. carotovora) protein is 2-keto-3-deoxygluconate permease.